A 323-amino-acid polypeptide reads, in one-letter code: Aspartate carbamoyltransferase catalytic subunit (323 aa).

Residues R55 and T56 each contribute to the carbamoyl phosphate site. K83 lines the L-aspartate pocket. Positions 105, 138, and 141 each coordinate carbamoyl phosphate. 2 residues coordinate L-aspartate: R181 and R235. Carbamoyl phosphate contacts are provided by G276 and P277.

The protein belongs to the aspartate/ornithine carbamoyltransferase superfamily. ATCase family. In terms of assembly, heterododecamer (2C3:3R2) of six catalytic PyrB chains organized as two trimers (C3), and six regulatory PyrI chains organized as three dimers (R2).

It carries out the reaction carbamoyl phosphate + L-aspartate = N-carbamoyl-L-aspartate + phosphate + H(+). Its pathway is pyrimidine metabolism; UMP biosynthesis via de novo pathway; (S)-dihydroorotate from bicarbonate: step 2/3. Its function is as follows. Catalyzes the condensation of carbamoyl phosphate and aspartate to form carbamoyl aspartate and inorganic phosphate, the committed step in the de novo pyrimidine nucleotide biosynthesis pathway. The polypeptide is Aspartate carbamoyltransferase catalytic subunit (Corynebacterium aurimucosum (strain ATCC 700975 / DSM 44827 / CIP 107346 / CN-1) (Corynebacterium nigricans)).